Here is a 189-residue protein sequence, read N- to C-terminus: dCTP deaminase (189 aa).

DCTP is bound by residues Lys112 to Arg117, Thr136 to Glu138, Gln157, Tyr171, and Gln181. The active-site Proton donor/acceptor is Glu138.

The protein belongs to the dCTP deaminase family. Homotrimer.

It carries out the reaction dCTP + H2O + H(+) = dUTP + NH4(+). Its pathway is pyrimidine metabolism; dUMP biosynthesis; dUMP from dCTP (dUTP route): step 1/2. Its function is as follows. Catalyzes the deamination of dCTP to dUTP. The polypeptide is dCTP deaminase (Nitrosospira multiformis (strain ATCC 25196 / NCIMB 11849 / C 71)).